Here is a 192-residue protein sequence, read N- to C-terminus: Ion-translocating oxidoreductase complex subunit A (192 aa).

Helical transmembrane passes span 5–25 (LLLL…FLGL), 39–59 (IGMS…SYLV), 65–85 (LPFD…AVVV), 102–122 (ALGI…VALL), 134–154 (AIYG…FSAM), and 171–191 (AIAM…TGLV).

This sequence belongs to the NqrDE/RnfAE family. In terms of assembly, the complex is composed of six subunits: RnfA, RnfB, RnfC, RnfD, RnfE and RnfG.

The protein localises to the cell inner membrane. Its function is as follows. Part of a membrane-bound complex that couples electron transfer with translocation of ions across the membrane. The chain is Ion-translocating oxidoreductase complex subunit A from Shewanella oneidensis (strain ATCC 700550 / JCM 31522 / CIP 106686 / LMG 19005 / NCIMB 14063 / MR-1).